Reading from the N-terminus, the 501-residue chain is E3 ubiquitin-protein ligase TRIM35 (501 aa).

N-acetylmethionine is present on Met-1. The residue at position 8 (Ser-8) is a Phosphoserine. The RING-type zinc-finger motif lies at 21–61 (CAVCYDPFRDAVTLRCGHNFCRRCVSGCWEVQTTPSCPVCK). The B box-type zinc finger occupies 96–137 (RSPRPCRAHRAPLTLFCVEDKELLCCACQADARHQEHRVQPI). Cys-101, His-104, Cys-123, and His-129 together coordinate Zn(2+). The stretch at 209–252 (MKEESRKKHLLAEEKMKQLAEQTEALAREIERLQMEMKEDDMTF) forms a coiled coil. Residues 284-495 (LESLQYRVWK…LRICHLRVSI (212 aa)) enclose the B30.2/SPRY domain.

Interacts with PKM isoform M2, but not isoform M1; this interaction may compete with that between PKM and FGFR1, and hence reduces FGFR1-dependent tyrosine phosphorylation of PKM. Interacts with IRF7; this interaction promotes IRF7 proteasomal degradation. Interacts with TRAF3; this interaction promotes TRAF3 activation.

The protein resides in the cytoplasm. Its subcellular location is the nucleus. It catalyses the reaction S-ubiquitinyl-[E2 ubiquitin-conjugating enzyme]-L-cysteine + [acceptor protein]-L-lysine = [E2 ubiquitin-conjugating enzyme]-L-cysteine + N(6)-ubiquitinyl-[acceptor protein]-L-lysine.. It participates in protein modification; protein ubiquitination. E3 ubiquitin-protein ligase that participates in multiple biological processes including cell death, glucose metabolism, and in particular, the innate immune response. Mediates 'Lys-63'-linked polyubiquitination of TRAF3 thereby promoting type I interferon production via RIG-I signaling pathway. Can also catalyze 'Lys-48'-linked polyubiquitination and proteasomal degradation of viral proteins such as influenza virus PB2. Acts as a negative feedback regulator of TLR7- and TLR9-triggered signaling. Mechanistically, promotes the 'Lys-48'-linked ubiquitination of IRF7 and induces its degradation via a proteasome-dependent pathway. Reduces FGFR1-dependent tyrosine phosphorylation of PKM, inhibiting PKM-dependent lactate production, glucose metabolism, and cell growth. The sequence is that of E3 ubiquitin-protein ligase TRIM35 (Trim35) from Rattus norvegicus (Rat).